Reading from the N-terminus, the 362-residue chain is Peptide chain release factor 1 (362 aa).

Position 237 is an N5-methylglutamine (Q237).

It belongs to the prokaryotic/mitochondrial release factor family. Post-translationally, methylated by PrmC. Methylation increases the termination efficiency of RF1.

Its subcellular location is the cytoplasm. Its function is as follows. Peptide chain release factor 1 directs the termination of translation in response to the peptide chain termination codons UAG and UAA. The polypeptide is Peptide chain release factor 1 (Legionella pneumophila (strain Paris)).